A 376-amino-acid polypeptide reads, in one-letter code: Aminomethyltransferase (376 aa).

This sequence belongs to the GcvT family. In terms of assembly, the glycine cleavage system is composed of four proteins: P, T, L and H.

It catalyses the reaction N(6)-[(R)-S(8)-aminomethyldihydrolipoyl]-L-lysyl-[protein] + (6S)-5,6,7,8-tetrahydrofolate = N(6)-[(R)-dihydrolipoyl]-L-lysyl-[protein] + (6R)-5,10-methylene-5,6,7,8-tetrahydrofolate + NH4(+). The glycine cleavage system catalyzes the degradation of glycine. This is Aminomethyltransferase from Nostoc sp. (strain PCC 7120 / SAG 25.82 / UTEX 2576).